A 104-amino-acid polypeptide reads, in one-letter code: Nucleoid-associated protein GAU_1113 (104 aa).

The protein belongs to the YbaB/EbfC family. As to quaternary structure, homodimer.

The protein localises to the cytoplasm. It is found in the nucleoid. Binds to DNA and alters its conformation. May be involved in regulation of gene expression, nucleoid organization and DNA protection. This chain is Nucleoid-associated protein GAU_1113, found in Gemmatimonas aurantiaca (strain DSM 14586 / JCM 11422 / NBRC 100505 / T-27).